Consider the following 101-residue polypeptide: Putative membrane protein insertion efficiency factor (101 aa).

The protein belongs to the UPF0161 family.

It localises to the cell inner membrane. Its function is as follows. Could be involved in insertion of integral membrane proteins into the membrane. In Methylobacterium sp. (strain 4-46), this protein is Putative membrane protein insertion efficiency factor.